The following is a 280-amino-acid chain: Clathrin adapter accessory protein LAA2 (280 aa).

A disordered region spans residues 1–26 (MSDRDQIEPVTNALDAESDSSDDFGN). The short motif at 19-30 (DSSDDFGNFSDA) is the Ear-binding motif element.

Interacts with the clathrin-associated adapter complex AP-1. Interacts with LAA1.

It is found in the cytoplasmic vesicle. It localises to the clathrin-coated vesicle. In terms of biological role, involved in localization of clathrin-associated adapter complex (AP-1) and subsequent AP-1-mediated clathrin-coated vesicle cargo loading. Directly mediates the interaction between LAA1 and AP-1 which is required for AP-1 localization. In complex with LAA1, cooperates with the small GTPase ARF1 and the phosphatidyl-inositol-4-phosphate (PI4P) synthesis to confer temporal specificity to AP-1 recruitment. This chain is Clathrin adapter accessory protein LAA2, found in Saccharomyces cerevisiae (strain ATCC 204508 / S288c) (Baker's yeast).